The following is a 1025-amino-acid chain: Multidrug resistance protein MdtC (1025 aa).

The next 12 helical transmembrane spans lie at 3 to 23, 333 to 353, 360 to 380, 387 to 407, 431 to 451, 463 to 483, 528 to 548, 853 to 873, 875 to 895, 897 to 917, 953 to 973, and 984 to 1004; these read FFAL…AITL, EVEQ…FLFL, IIPA…MYLC, LSLM…IVVL, VGFT…PLLL, FAVT…TLTP, LVGV…ISIP, VILI…LYES, VHPL…LLAL, LFNA…IGIV, PIMM…LSGG, and ITIV…TPVV.

The protein belongs to the resistance-nodulation-cell division (RND) (TC 2.A.6) family. MdtC subfamily. As to quaternary structure, part of a tripartite efflux system composed of MdtA, MdtB and MdtC. MdtC forms a heteromultimer with MdtB.

Its subcellular location is the cell inner membrane. The MdtABC tripartite complex confers resistance against novobiocin and deoxycholate. This Escherichia coli O17:K52:H18 (strain UMN026 / ExPEC) protein is Multidrug resistance protein MdtC.